A 1686-amino-acid polypeptide reads, in one-letter code: A disintegrin and metalloproteinase with thrombospondin motifs 7 (1686 aa).

Residues 1-27 (MPGGPSPRSPAPLLRPLLLLLCALAPG) form the signal peptide. Residues 28 to 236 (APGPAPGRAT…RPRLRRLHQR (209 aa)) constitute a propeptide that is removed on maturation. N-linked (GlcNAc...) asparagine glycosylation occurs at Asn94. Positions 202–209 (STCGVQVY) match the Cysteine switch motif. A Zn(2+)-binding site is contributed by Cys204. The 211-residue stretch at 242-452 (KWVETLVVAD…GWGLCLDDPP (211 aa)) folds into the Peptidase M12B domain. Disulfide bonds link Cys318–Cys372, Cys347–Cys354, Cys366–Cys447, Cys405–Cys431, Cys474–Cys497, Cys485–Cys503, Cys492–Cys522, Cys516–Cys527, Cys550–Cys587, Cys554–Cys592, and Cys565–Cys577. His388 is a binding site for Zn(2+). Glu389 is an active-site residue. Residues His392 and His398 each contribute to the Zn(2+) site. Positions 462-537 (VPPGVLYDVS…VPVGFRPEAV (76 aa)) constitute a Disintegrin domain. The region spanning 538–593 (DGGWSGWSAWSICSRSCGMGVQSAERQCTQPTPKYKGRYCVGERKRFRLCNLQACP) is the TSP type-1 1 domain. Asn693 and Asn778 each carry an N-linked (GlcNAc...) asparagine glycan. The segment at 698–809 (HTVSGTFEEA…PGVHYEYTIH (112 aa)) is spacer. 3 consecutive TSP type-1 domains span residues 821–880 (PVFS…QPCP), 881–940 (ARWW…NRHV), and 942–995 (CPAT…PLCR). Disordered regions lie at residues 1024 to 1043 (HHLA…TMGN), 1080 to 1257 (PSEE…SPDV), and 1344 to 1396 (LGHM…PLAP). Over residues 1182–1205 (DGLQTPATPESQNDFPVGKDSQSQ) the composition is skewed to polar residues. Residues 1210–1226 (WRDRTNEVFKDDEEPKG) show a composition bias toward basic and acidic residues. The segment covering 1360–1375 (PESLSPEVPLSSRLLS) has biased composition (low complexity). TSP type-1 domains follow at residues 1411–1459 (RNAG…RRCH), 1462–1522 (PCAT…QPCL), 1523–1567 (SWYT…PCNT), and 1569–1629 (PCTQ…EDCE). The PLAC domain maps to 1632–1672 (EPPRCERDRLSFGFCETLRLLGRCQLPTIRTQCCRSCSPPS). Positions 1666–1686 (RSCSPPSHGAPSRGHQRVARR) are disordered.

Interacts with COMP. Zn(2+) serves as cofactor. N-glycosylated. Can be O-fucosylated by POFUT2 on a serine or a threonine residue found within the consensus sequence C1-X(2)-(S/T)-C2-G of the TSP type-1 repeat domains where C1 and C2 are the first and second cysteine residue of the repeat, respectively. Fucosylated repeats can then be further glycosylated by the addition of a beta-1,3-glucose residue by the glucosyltransferase, B3GALTL. Fucosylation mediates the efficient secretion of ADAMTS family members. Can also be C-glycosylated with one or two mannose molecules on tryptophan residues within the consensus sequence W-X-X-W of the TPRs. N- and C-glycosylations can also facilitate secretion. Post-translationally, O-glycosylated proteoglycan; contains chondroitin sulfate. In terms of processing, may be cleaved by a furin endopeptidase. The precursor is sequentially processed. Expressed in heart, brain, placenta, lung, liver, skeletal muscle, kidney and pancreas. Detected in meniscus, bone, tendon, cartilage, synovium, fat and ligaments.

It localises to the secreted. Its subcellular location is the extracellular space. The protein resides in the extracellular matrix. Functionally, metalloprotease. Was previously shown to degrade COMP. However, a later study found no activity against COMP. The sequence is that of A disintegrin and metalloproteinase with thrombospondin motifs 7 (ADAMTS7) from Homo sapiens (Human).